Here is a 658-residue protein sequence, read N- to C-terminus: CXXC-type zinc finger protein 1 (658 aa).

M1 carries the N-acetylmethionine modification. Residues 1-14 (MEGDASDPEPPDAG) show a composition bias toward acidic residues. Residues 1–20 (MEGDASDPEPPDAGEDSKSE) are disordered. 2 positions are modified to phosphoserine: S6 and S19. Residues 28–76 (YCICRKPDINCFMIGCDNCNEWFHGDCIRITEKMAKAIREWYCRECREK) form a PHD-type zinc finger. The interval 84–164 (YRHKKSRERD…HQQQQQQQQI (81 aa)) is disordered. A compositionally biased stretch (basic and acidic residues) spans 90-120 (RERDSSERDGSEPRDEGGGRKRPAPDPDLQR). Residues 153–163 (QHHQQQQQQQQ) are compositionally biased toward low complexity. The segment at 162–211 (QQIKRSARMCGECEACRRTEDCGHCDFCRDMKKFGGPNKIRQKCRLRQCQ) adopts a CXXC-type zinc-finger fold. Residues C171, C174, C177, C183, C186, C189, C205, and C210 each contribute to the Zn(2+) site. 2 disordered regions span residues 221 to 285 (FPSS…SDED) and 327 to 373 (VKVK…DPAS). Residue S226 is modified to Phosphoserine. T229 bears the Phosphothreonine mark. Residue K252 forms a Glycyl lysine isopeptide (Lys-Gly) (interchain with G-Cter in SUMO2) linkage. The segment covering 327–336 (VKVKHVKRRE) has biased composition (basic residues). Residues 337 to 347 (KKSEKKKDERY) show a composition bias toward basic and acidic residues. A compositionally biased stretch (basic residues) spans 348–360 (KRHRQKQKHKDKW). The span at 361-370 (KHPERADAKD) shows a compositional bias: basic and acidic residues. Residues 428 to 470 (GKKLLERIRREQQSARTRLQEMERRFHELEAIILRAKQQAVRE) are a coiled coil.

Component of the SET1 complex, at least composed of the catalytic subunit (SETD1A or SETD1B), WDR5, WDR82, RBBP5, ASH2L/ASH2, CXXC1/CFP1, HCFC1 and DPY30. Interacts with SETD1A. Interacts with ZNF335. Interacts with PRDM9; this interaction does not link PRDM9-activated recombination hotspot sites with DSB machinery and is not required for the hotspot recognition pathway. Interacts with histone H3K4me3. Post-translationally, may be regulated by proteolysis.

Its subcellular location is the nucleus speckle. It localises to the nucleus. Transcriptional activator that exhibits a unique DNA binding specificity for CpG unmethylated motifs with a preference for CpGG. This chain is CXXC-type zinc finger protein 1 (CXXC1), found in Bos taurus (Bovine).